A 23-amino-acid chain; its full sequence is Basic phospholipase A2 CB1 (23 aa).

As to quaternary structure, heterodimer of an acidic subunit and a basic chain. The acidic subunit is non-toxic, without enzymatic activity and comprises 3 peptides that are cross-linked by 7 disulfide bridges. The basic subunit is toxic, has phospholipase A2 activity and is composed of a single chain. It depends on Ca(2+) as a cofactor. Post-translationally, contains 7 disulfide bonds. In terms of tissue distribution, expressed by the venom gland.

It localises to the secreted. The catalysed reaction is a 1,2-diacyl-sn-glycero-3-phosphocholine + H2O = a 1-acyl-sn-glycero-3-phosphocholine + a fatty acid + H(+). Functionally, snake venom phospholipase A2 (PLA2) that shows presynaptic neurotoxicity. PLA2 catalyzes the calcium-dependent hydrolysis of the 2-acyl groups in 3-sn-phosphoglycerides. The chain is Basic phospholipase A2 CB1 from Crotalus basiliscus (Mexican west-coast rattlesnake).